A 269-amino-acid polypeptide reads, in one-letter code: Diphthine synthase (269 aa).

Residues L10, D87, V90, 115 to 116, L166, A209, and H234 contribute to the S-adenosyl-L-methionine site; that span reads SI.

Belongs to the diphthine synthase family. In terms of assembly, homodimer.

It carries out the reaction 2-[(3S)-amino-3-carboxypropyl]-L-histidyl-[translation elongation factor 2] + 3 S-adenosyl-L-methionine = diphthine-[translation elongation factor 2] + 3 S-adenosyl-L-homocysteine + 3 H(+). It functions in the pathway protein modification; peptidyl-diphthamide biosynthesis. In terms of biological role, S-adenosyl-L-methionine-dependent methyltransferase that catalyzes the trimethylation of the amino group of the modified target histidine residue in translation elongation factor 2 (EF-2), to form an intermediate called diphthine. The three successive methylation reactions represent the second step of diphthamide biosynthesis. This is Diphthine synthase from Pyrococcus furiosus (strain ATCC 43587 / DSM 3638 / JCM 8422 / Vc1).